A 589-amino-acid polypeptide reads, in one-letter code: Probable galacturonosyltransferase 6 (589 aa).

Residues 1 to 6 (MKQIRR) are Cytoplasmic-facing. Residues 7–27 (WQRILILALLSISVFAPLIFV) form a helical; Signal-anchor for type II membrane protein membrane-spanning segment. At 28–589 (SNRLKSITPV…TYLQQCNLQA (562 aa)) the chain is on the lumenal side. Asparagine 83 and asparagine 126 each carry an N-linked (GlcNAc...) asparagine glycan. The disordered stretch occupies residues 127-151 (KTDFKPPLSKGEKNTRVQPDRATDV). Over residues 136–151 (KGEKNTRVQPDRATDV) the composition is skewed to basic and acidic residues. 2 N-linked (GlcNAc...) asparagine glycosylation sites follow: asparagine 317 and asparagine 454.

The protein belongs to the glycosyltransferase 8 family. Expressed in roots, inflorescences, siliques, leaves and stems.

It localises to the golgi apparatus membrane. It participates in glycan metabolism; pectin biosynthesis. In terms of biological role, probably involved in pectin biosynthesis in cell walls. This is Probable galacturonosyltransferase 6 (GAUT6) from Arabidopsis thaliana (Mouse-ear cress).